A 461-amino-acid chain; its full sequence is Chromosomal replication initiator protein DnaA (461 aa).

The tract at residues 1–83 (MDHSPWQRCL…LRFDVGSKPT (83 aa)) is domain I, interacts with DnaA modulators. Residues 83–124 (TIDNSVTNSPVSRNTGGNESLFAKATSAPKVAEPESNIPKKT) are domain II. A domain III, AAA+ region region spans residues 125-341 (NVRLNYTFEN…GALNRVIANA (217 aa)). ATP is bound by residues Gly-169, Gly-171, Lys-172, and Thr-173. Residues 342–461 (NFTGRAITID…YSNLIRTLSS (120 aa)) are domain IV, binds dsDNA.

Belongs to the DnaA family. Oligomerizes as a right-handed, spiral filament on DNA at oriC.

It is found in the cytoplasm. Its function is as follows. Plays an essential role in the initiation and regulation of chromosomal replication. ATP-DnaA binds to the origin of replication (oriC) to initiate formation of the DNA replication initiation complex once per cell cycle. Binds the DnaA box (a 9 base pair repeat at the origin) and separates the double-stranded (ds)DNA. Forms a right-handed helical filament on oriC DNA; dsDNA binds to the exterior of the filament while single-stranded (ss)DNA is stabiized in the filament's interior. The ATP-DnaA-oriC complex binds and stabilizes one strand of the AT-rich DNA unwinding element (DUE), permitting loading of DNA polymerase. After initiation quickly degrades to an ADP-DnaA complex that is not apt for DNA replication. Binds acidic phospholipids. In Colwellia psychrerythraea (strain 34H / ATCC BAA-681) (Vibrio psychroerythus), this protein is Chromosomal replication initiator protein DnaA.